A 349-amino-acid polypeptide reads, in one-letter code: Putative phytanoyl-CoA dioxygenase (349 aa).

Residues K118 and 169–171 (HLD) each bind 2-oxoglutarate. H169 and D171 together coordinate Fe cation.

The protein belongs to the PhyH family. Fe cation is required as a cofactor. L-ascorbate serves as cofactor.

The catalysed reaction is phytanoyl-CoA + 2-oxoglutarate + O2 = 2-hydroxyphytanoyl-CoA + succinate + CO2. It participates in lipid metabolism; fatty acid metabolism. Its function is as follows. Converts phytanoyl-CoA to 2-hydroxyphytanoyl-CoA. The polypeptide is Putative phytanoyl-CoA dioxygenase (Dictyostelium discoideum (Social amoeba)).